A 459-amino-acid polypeptide reads, in one-letter code: Anthocyanidin 3-O-glucoside 2''-O-glucosyltransferase (459 aa).

Residue histidine 20 is the Proton acceptor of the active site. An anthocyanidin is bound at residue histidine 20. Residue aspartate 117 is the Charge relay of the active site. Threonine 138, valine 335, glutamine 337, histidine 352, tryptophan 355, serine 357, and glutamate 360 together coordinate UDP-alpha-D-glucose. Glycine 375 lines the an anthocyanidin pocket. Positions 376 and 377 each coordinate UDP-alpha-D-glucose.

This sequence belongs to the UDP-glycosyltransferase family.

It carries out the reaction an anthocyanidin 3-O-beta-D-glucoside + UDP-alpha-D-glucose = an anthocyanidin 3-O-sophoroside + UDP + 2 H(+). It functions in the pathway pigment biosynthesis; anthocyanin biosynthesis. Glycosyltransferase that mediates the glucosylation of anthocyanidin 3-O-glucosides to yield anthocyanidin 3-O-sophorosides. 3-O-sophoroside derivatives are required for the color of flowers. The polypeptide is Anthocyanidin 3-O-glucoside 2''-O-glucosyltransferase (3GGT) (Ipomoea purpurea (Common morning glory)).